Reading from the N-terminus, the 229-residue chain is Uracil-DNA glycosylase (229 aa).

Asp-67 (proton acceptor) is an active-site residue.

It belongs to the uracil-DNA glycosylase (UDG) superfamily. UNG family.

Its subcellular location is the cytoplasm. The enzyme catalyses Hydrolyzes single-stranded DNA or mismatched double-stranded DNA and polynucleotides, releasing free uracil.. Functionally, excises uracil residues from the DNA which can arise as a result of misincorporation of dUMP residues by DNA polymerase or due to deamination of cytosine. In Coxiella burnetii (strain CbuG_Q212) (Coxiella burnetii (strain Q212)), this protein is Uracil-DNA glycosylase.